We begin with the raw amino-acid sequence, 94 residues long: UPF0768 protein YBL029C-A (94 aa).

This sequence belongs to the UPF0768 family.

It is found in the cell membrane. In Saccharomyces cerevisiae (strain ATCC 204508 / S288c) (Baker's yeast), this protein is UPF0768 protein YBL029C-A.